Consider the following 185-residue polypeptide: MKLKPVLYLLMLLGCLGLKSAHAATLAHGISASWHSFSQKWNEPQTFDPYIPSIIWHNRWTYDADKIDKYNERPWGAGGGVSHFDKKGNWNGIYLMAFKDSFNKWELISGYGWEKTWRPLSDPDFHLGLGYTAGVTMRDNWSYIPIPVLLPLASIGYEYVSFQMTYIPGTYNNGNVYFAWLRWQL.

The N-terminal stretch at 1-14 (MKLKPVLYLLMLLG) is a signal peptide. A lipid anchor (N-palmitoyl cysteine) is attached at C15. Residue C15 is the site of S-diacylglycerol cysteine attachment. Residues H57, D100, and S101 contribute to the active site.

It belongs to the lipid A palmitoyltransferase family. As to quaternary structure, homodimer.

The protein localises to the cell outer membrane. It carries out the reaction a lipid A + a 1,2-diacyl-sn-glycero-3-phosphocholine = a hepta-acyl lipid A + a 2-acyl-sn-glycero-3-phosphocholine. The catalysed reaction is a lipid IVA + a 1,2-diacyl-sn-glycero-3-phosphocholine = a lipid IVB + a 2-acyl-sn-glycero-3-phosphocholine. It catalyses the reaction a lipid IIA + a 1,2-diacyl-sn-glycero-3-phosphocholine = a lipid IIB + a 2-acyl-sn-glycero-3-phosphocholine. Its function is as follows. Transfers a fatty acid residue from the sn-1 position of a phospholipid to the N-linked hydroxyfatty acid chain on the proximal unit of lipid A or its precursors. The sequence is that of Lipid A acyltransferase PagP from Erwinia sp. (strain Ejp617).